A 190-amino-acid chain; its full sequence is Small ribosomal subunit protein uS7 (190 aa).

An N-acetylthreonine modification is found at T2.

This sequence belongs to the universal ribosomal protein uS7 family. In terms of assembly, component of the small ribosomal subunit. Part of the small subunit (SSU) processome, composed of more than 70 proteins and the RNA chaperone small nucleolar RNA (snoRNA) U3.

It localises to the cytoplasm. It is found in the nucleus. Its subcellular location is the nucleolus. In terms of biological role, component of the small ribosomal subunit. The ribosome is a large ribonucleoprotein complex responsible for the synthesis of proteins in the cell. Part of the small subunit (SSU) processome, first precursor of the small eukaryotic ribosomal subunit. During the assembly of the SSU processome in the nucleolus, many ribosome biogenesis factors, an RNA chaperone and ribosomal proteins associate with the nascent pre-rRNA and work in concert to generate RNA folding, modifications, rearrangements and cleavage as well as targeted degradation of pre-ribosomal RNA by the RNA exosome. This chain is Small ribosomal subunit protein uS7 (rps5), found in Dictyostelium discoideum (Social amoeba).